Reading from the N-terminus, the 974-residue chain is Isoleucine--tRNA ligase (974 aa).

The 'HIGH' region signature appears at 69-79; sequence PYANGALHMGH. Residue Glu585 coordinates L-isoleucyl-5'-AMP. The short motif at 626 to 630 is the 'KMSKS' region element; the sequence is KMSKS. Lys629 contributes to the ATP binding site. 4 residues coordinate Zn(2+): Cys939, Cys942, Cys959, and Cys962.

This sequence belongs to the class-I aminoacyl-tRNA synthetase family. IleS type 1 subfamily. In terms of assembly, monomer. It depends on Zn(2+) as a cofactor.

Its subcellular location is the cytoplasm. It carries out the reaction tRNA(Ile) + L-isoleucine + ATP = L-isoleucyl-tRNA(Ile) + AMP + diphosphate. In terms of biological role, catalyzes the attachment of isoleucine to tRNA(Ile). As IleRS can inadvertently accommodate and process structurally similar amino acids such as valine, to avoid such errors it has two additional distinct tRNA(Ile)-dependent editing activities. One activity is designated as 'pretransfer' editing and involves the hydrolysis of activated Val-AMP. The other activity is designated 'posttransfer' editing and involves deacylation of mischarged Val-tRNA(Ile). The chain is Isoleucine--tRNA ligase from Parasynechococcus marenigrum (strain WH8102).